The sequence spans 216 residues: Thiosulfate dehydrogenase electron acceptor (216 aa).

The first 22 residues, 1–22, serve as a signal peptide directing secretion; the sequence is MKSIHWPLAGVAALLLSMQAQA. Cytochrome c domains follow at residues 23–108 and 118–210; these read ADGQ…EAMP and SEAA…ANVG. The heme c site is built by C41, C44, H45, C141, C144, and H145.

Post-translationally, binds 2 heme c groups covalently per subunit.

In terms of biological role, acts as an electron acceptor for the thiosulfate dehydrogenase TsdA. This Stutzerimonas stutzeri (strain A1501) (Pseudomonas stutzeri) protein is Thiosulfate dehydrogenase electron acceptor (tsdB).